The sequence spans 416 residues: 3-isopropylmalate dehydratase large subunit 2 (416 aa).

3 residues coordinate [4Fe-4S] cluster: C296, C356, and C359.

It belongs to the aconitase/IPM isomerase family. LeuC type 2 subfamily. In terms of assembly, heterodimer of LeuC and LeuD. The cofactor is [4Fe-4S] cluster.

It carries out the reaction (2R,3S)-3-isopropylmalate = (2S)-2-isopropylmalate. It functions in the pathway amino-acid biosynthesis; L-leucine biosynthesis; L-leucine from 3-methyl-2-oxobutanoate: step 2/4. Functionally, catalyzes the isomerization between 2-isopropylmalate and 3-isopropylmalate, via the formation of 2-isopropylmaleate. The polypeptide is 3-isopropylmalate dehydratase large subunit 2 (Archaeoglobus fulgidus (strain ATCC 49558 / DSM 4304 / JCM 9628 / NBRC 100126 / VC-16)).